The sequence spans 359 residues: Quinolinate synthase (359 aa).

Residues His-81 and Ser-99 each coordinate iminosuccinate. Cys-144 serves as a coordination point for [4Fe-4S] cluster. Residues 170-172 and Ser-187 contribute to the iminosuccinate site; that span reads YVN. Residue Cys-229 coordinates [4Fe-4S] cluster. Iminosuccinate-binding positions include 255–257 and Thr-272; that span reads HPE. Cys-315 contacts [4Fe-4S] cluster.

This sequence belongs to the quinolinate synthase family. Type 2 subfamily. Requires [4Fe-4S] cluster as cofactor.

It is found in the cytoplasm. The enzyme catalyses iminosuccinate + dihydroxyacetone phosphate = quinolinate + phosphate + 2 H2O + H(+). The protein operates within cofactor biosynthesis; NAD(+) biosynthesis; quinolinate from iminoaspartate: step 1/1. Catalyzes the condensation of iminoaspartate with dihydroxyacetone phosphate to form quinolinate. The sequence is that of Quinolinate synthase from Sinorhizobium medicae (strain WSM419) (Ensifer medicae).